Reading from the N-terminus, the 171-residue chain is Translationally-controlled tumor protein homolog (171 aa).

A TCTP domain is found at 1-171; that stretch reads MKIWKDVFTG…FKHGLEEEKF (171 aa).

The protein belongs to the TCTP family.

It is found in the cytoplasm. In terms of biological role, involved in calcium binding and microtubule stabilization. The sequence is that of Translationally-controlled tumor protein homolog from Anopheles gambiae (African malaria mosquito).